Here is a 522-residue protein sequence, read N- to C-terminus: MLRTSCGGMLLLVHALGLVRAQFPRACVTPEGLRSAQCCPSPSALESDPCGALAGPGRCVDVRMRAHGPQYPYEGATTRALARASSRACRCNGNFGGFDCGGCAHGFTGDACEQRVPVVRRNVMQLSADEKRFFVNALDQAKRAPHPDTVIATRRYSEILGPDNSTTQFENISIYNLFVWTHYYSVSKTFLGAGQDSFGGVDFSHEGPGFLTWHRYHLLQLERDMQVMLGDPSFALPYWDFAIGGSECDICTDELMGARSSSDSSSISSNSIFSRWRVICESVEEYDTLGTICNSSESSPIRRNPAGNTARPMVQRLPEPQDVEACLELTAFDSPPFYSTSSDSFRNSIEGYSAPQGNYDPVVRSLHNLAHLFLNGTGGQTHLSPNDPIFVLLHTFTDAVFDEWLRRHASDASIYPLENTPIGHNREFNMVPFWPPVTNAEMFVTAAENLGYSYEAEWPARPLTPTQIVTVAVVAALLLVAIIFAASTCVVHLRGNRTEGRQPLLGDQYQRYEDHNKTQSVV.

Positions 1–21 are cleaved as a signal peptide; the sequence is MLRTSCGGMLLLVHALGLVRA. The Lumenal, melanosome portion of the chain corresponds to 22 to 470; it reads QFPRACVTPE…RPLTPTQIVT (449 aa). Intrachain disulfides connect Cys27-Cys38, Cys39-Cys59, Cys50-Cys89, Cys91-Cys100, and Cys103-Cys112. N-linked (GlcNAc...) asparagine glycans are attached at residues Asn164 and Asn171. 3 residues coordinate Zn(2+): His182, His205, and His214. 2 cysteine pairs are disulfide-bonded: Cys248/Cys251 and Cys280/Cys293. An N-linked (GlcNAc...) asparagine glycan is attached at Asn294. His367 and His371 together coordinate Zn(2+). A glycan (N-linked (GlcNAc...) asparagine) is linked at Asn375. His394 lines the Zn(2+) pocket. The helical transmembrane segment at 471–491 threads the bilayer; sequence VAVVAALLLVAIIFAASTCVV. Residues 492-522 lie on the Cytoplasmic side of the membrane; the sequence is HLRGNRTEGRQPLLGDQYQRYEDHNKTQSVV.

The protein belongs to the tyrosinase family. The cofactor is Cu(2+). It depends on Zn(2+) as a cofactor.

It is found in the melanosome membrane. The catalysed reaction is 2 5,6-dihydroxyindole-2-carboxylate + O2 = 2 indole-5,6-quinone-2-carboxylate + 2 H2O. Its pathway is pigment biosynthesis; melanin biosynthesis. Functionally, plays a role in melanin biosynthesis. Catalyzes the oxidation of 5,6-dihydroxyindole-2-carboxylic acid (DHICA) into indole-5,6-quinone-2-carboxylic acid. May regulate or influence the type of melanin synthesized. Also to a lower extent, capable of hydroxylating tyrosine and producing melanin. The sequence is that of 5,6-dihydroxyindole-2-carboxylic acid oxidase (tyrp1) from Carassius auratus (Goldfish).